The chain runs to 308 residues: Ribonuclease Z (308 aa).

Zn(2+)-binding residues include histidine 63, histidine 65, aspartate 67, histidine 68, histidine 140, aspartate 211, and histidine 269. The active-site Proton acceptor is aspartate 67.

The protein belongs to the RNase Z family. In terms of assembly, homodimer. The cofactor is Zn(2+).

It catalyses the reaction Endonucleolytic cleavage of RNA, removing extra 3' nucleotides from tRNA precursor, generating 3' termini of tRNAs. A 3'-hydroxy group is left at the tRNA terminus and a 5'-phosphoryl group is left at the trailer molecule.. Zinc phosphodiesterase, which displays some tRNA 3'-processing endonuclease activity. Probably involved in tRNA maturation, by removing a 3'-trailer from precursor tRNA. The polypeptide is Ribonuclease Z (Bacillus velezensis (strain DSM 23117 / BGSC 10A6 / LMG 26770 / FZB42) (Bacillus amyloliquefaciens subsp. plantarum)).